The following is a 1412-amino-acid chain: DNA-directed RNA polymerase subunit beta' (1412 aa).

Residues Cys70, Cys72, Cys85, and Cys88 each contribute to the Zn(2+) site. Residues Asp460, Asp462, and Asp464 each contribute to the Mg(2+) site. 4 residues coordinate Zn(2+): Cys814, Cys888, Cys895, and Cys898. The disordered stretch occupies residues 1378-1412 (EREAARQLANPFEDAPVTVDADAPQSDAGQEGSAE).

It belongs to the RNA polymerase beta' chain family. The RNAP catalytic core consists of 2 alpha, 1 beta, 1 beta' and 1 omega subunit. When a sigma factor is associated with the core the holoenzyme is formed, which can initiate transcription. Mg(2+) is required as a cofactor. Requires Zn(2+) as cofactor.

It carries out the reaction RNA(n) + a ribonucleoside 5'-triphosphate = RNA(n+1) + diphosphate. DNA-dependent RNA polymerase catalyzes the transcription of DNA into RNA using the four ribonucleoside triphosphates as substrates. The polypeptide is DNA-directed RNA polymerase subunit beta' (Bordetella petrii (strain ATCC BAA-461 / DSM 12804 / CCUG 43448)).